Reading from the N-terminus, the 281-residue chain is Splicing regulator RBM11 (281 aa).

The RRM domain occupies 10 to 87; it reads RTVFVGNLEA…RPINVQYRFG (78 aa). Positions 184–281 are disordered; sequence PSSYKWTHQQ…FRKSKKKKRY (98 aa). Composition is skewed to polar residues over residues 187 to 217 and 229 to 242; these read YKWT…SSLN and YKWT…SDLY. The short motif at 245–280 is the Bipartite nuclear localization signal element; that stretch reads NKRKRQKQTSDSDSSTDNNRGNECSQKFRKSKKKKR. A compositionally biased stretch (basic residues) spans 271-281; that stretch reads KFRKSKKKKRY.

Homodimer. In terms of tissue distribution, expressed in brain, hippocampus, prefrontal cortex, cerebellum, spinal cord, testis, mammary gland, spleen and kidney. Also expressed in fetal brain.

The protein localises to the nucleus. Its subcellular location is the nucleoplasm. It localises to the nucleus speckle. In terms of biological role, tissue-specific splicing factor with potential implication in the regulation of alternative splicing during neuron and germ cell differentiation. Antagonizes SRSF1-mediated BCL-X splicing. May affect the choice of alternative 5' splice sites by binding to specific sequences in exons and antagonizing the SR protein SRSF1. In Homo sapiens (Human), this protein is Splicing regulator RBM11.